A 232-amino-acid chain; its full sequence is MSNVDHAEIAKFEALAHRWWDRESEFKPLHEINPLRVNWIDEHISLAGKKVIDIGCGGGILSEAMAQRGAQVTGIDMGEAPLSVARLHLLESGLEIDYRQITAEAMAAEAPEQFDVVTCLEMLEHVPDPASVIRACATLVKPGGQVFFSTINRNPKAYAFAIIGAEYVLQLLPRGTHDFKKFIRPSELGAWSRDAGLAVKDIIGLTYNPLTKHYKLSADVDVNYMVQTVKES.

Residues R36, G55, D76, and L120 each coordinate S-adenosyl-L-methionine.

The protein belongs to the methyltransferase superfamily. UbiG/COQ3 family.

The catalysed reaction is a 3-demethylubiquinol + S-adenosyl-L-methionine = a ubiquinol + S-adenosyl-L-homocysteine + H(+). It catalyses the reaction a 3-(all-trans-polyprenyl)benzene-1,2-diol + S-adenosyl-L-methionine = a 2-methoxy-6-(all-trans-polyprenyl)phenol + S-adenosyl-L-homocysteine + H(+). It participates in cofactor biosynthesis; ubiquinone biosynthesis. In terms of biological role, O-methyltransferase that catalyzes the 2 O-methylation steps in the ubiquinone biosynthetic pathway. The chain is Ubiquinone biosynthesis O-methyltransferase from Stutzerimonas stutzeri (strain A1501) (Pseudomonas stutzeri).